The following is a 447-amino-acid chain: Tubulin alpha-2 chain (447 aa).

Residues Gln-11, Glu-71, Gly-144, Thr-145, Thr-179, Asn-206, and Asn-228 each contribute to the GTP site. Residue Glu-71 participates in Mg(2+) binding. Residue Glu-254 is part of the active site.

It belongs to the tubulin family. Dimer of alpha and beta chains. A typical microtubule is a hollow water-filled tube with an outer diameter of 25 nm and an inner diameter of 15 nM. Alpha-beta heterodimers associate head-to-tail to form protofilaments running lengthwise along the microtubule wall with the beta-tubulin subunit facing the microtubule plus end conferring a structural polarity. Microtubules usually have 13 protofilaments but different protofilament numbers can be found in some organisms and specialized cells. Requires Mg(2+) as cofactor. Undergoes a tyrosination/detyrosination cycle, the cyclic removal and re-addition of a C-terminal tyrosine residue by the enzymes tubulin tyrosine carboxypeptidase (TTCP) and tubulin tyrosine ligase (TTL), respectively.

It localises to the cytoplasm. The protein localises to the cytoskeleton. It carries out the reaction GTP + H2O = GDP + phosphate + H(+). Its function is as follows. Tubulin is the major constituent of microtubules, a cylinder consisting of laterally associated linear protofilaments composed of alpha- and beta-tubulin heterodimers. Microtubules grow by the addition of GTP-tubulin dimers to the microtubule end, where a stabilizing cap forms. Below the cap, tubulin dimers are in GDP-bound state, owing to GTPase activity of alpha-tubulin. This Eleusine indica (Goosegrass) protein is Tubulin alpha-2 chain (TUBA2).